Consider the following 446-residue polypeptide: MLAVAILAAGKGTRMKSCLPKVLQPLAGSTLVERVLTSCSGLQPQRRLLIVGHQAQEVQQQLTDWQGLEFVVQQPQNGTGHAVQQVLPVLEGFDGELLVLNGDVPLLRPSTIEHLVNEHRSSGADVTLLTARLADPTGYGRVFSDQQGRVSSIVEHRDCSDEQRHNNLTNAGIYCFNWKKLAAVLPQLCSDNDQGELYLTDTVALLPIAMHVEVADPDEVNGINDRCQLANCEALLQERLRNYWMKEGVTFTDPASCTLSEDCQFGRDVVIEPQTHLRGCCNIGDGCQLGPGSLIENAELGHGVSVLHSVVCDAKVGNEVAIGPFSHLRPGAGIADQCRIGNFVEIKKSQIGEGSKVNHLSYIGDAQLGRHVNVGAGTITANYDGVRKHLTVVGDNSKTGANSVLVAPIVLGSDVTVGAGSTLTKDVPNGALALGRSKQLIKNGWQ.

A pyrophosphorylase region spans residues 1–226 (MLAVAILAAG…PDEVNGINDR (226 aa)). Residues 7–10 (LAAG), K21, Q73, and 78–79 (GT) each bind UDP-N-acetyl-alpha-D-glucosamine. Residue D103 participates in Mg(2+) binding. G140, E155, N170, and N224 together coordinate UDP-N-acetyl-alpha-D-glucosamine. N224 is a binding site for Mg(2+). A linker region spans residues 227 to 247 (CQLANCEALLQERLRNYWMKE). Positions 248–446 (GVTFTDPASC…SKQLIKNGWQ (199 aa)) are N-acetyltransferase. Residues R329 and K347 each coordinate UDP-N-acetyl-alpha-D-glucosamine. Catalysis depends on H359, which acts as the Proton acceptor. Positions 362 and 373 each coordinate UDP-N-acetyl-alpha-D-glucosamine. Acetyl-CoA contacts are provided by residues A376, 382–383 (NY), A419, and R436.

It in the N-terminal section; belongs to the N-acetylglucosamine-1-phosphate uridyltransferase family. The protein in the C-terminal section; belongs to the transferase hexapeptide repeat family. As to quaternary structure, homotrimer. Requires Mg(2+) as cofactor.

It is found in the cytoplasm. The enzyme catalyses alpha-D-glucosamine 1-phosphate + acetyl-CoA = N-acetyl-alpha-D-glucosamine 1-phosphate + CoA + H(+). It catalyses the reaction N-acetyl-alpha-D-glucosamine 1-phosphate + UTP + H(+) = UDP-N-acetyl-alpha-D-glucosamine + diphosphate. It participates in nucleotide-sugar biosynthesis; UDP-N-acetyl-alpha-D-glucosamine biosynthesis; N-acetyl-alpha-D-glucosamine 1-phosphate from alpha-D-glucosamine 6-phosphate (route II): step 2/2. The protein operates within nucleotide-sugar biosynthesis; UDP-N-acetyl-alpha-D-glucosamine biosynthesis; UDP-N-acetyl-alpha-D-glucosamine from N-acetyl-alpha-D-glucosamine 1-phosphate: step 1/1. Its pathway is bacterial outer membrane biogenesis; LPS lipid A biosynthesis. Functionally, catalyzes the last two sequential reactions in the de novo biosynthetic pathway for UDP-N-acetylglucosamine (UDP-GlcNAc). The C-terminal domain catalyzes the transfer of acetyl group from acetyl coenzyme A to glucosamine-1-phosphate (GlcN-1-P) to produce N-acetylglucosamine-1-phosphate (GlcNAc-1-P), which is converted into UDP-GlcNAc by the transfer of uridine 5-monophosphate (from uridine 5-triphosphate), a reaction catalyzed by the N-terminal domain. The polypeptide is Bifunctional protein GlmU (Prochlorococcus marinus (strain MIT 9313)).